We begin with the raw amino-acid sequence, 303 residues long: Glutamate formimidoyltransferase (303 aa).

Residue H81 is the For formimidoyltransferase activity of the active site. 164 to 172 (GPSVVGKAG) contacts folate.

Belongs to the formiminotransferase family.

Its subcellular location is the cytoplasm. The enzyme catalyses (6S)-5-formyl-5,6,7,8-tetrahydrofolate + L-glutamate = N-formyl-L-glutamate + (6S)-5,6,7,8-tetrahydrofolate + H(+). It catalyses the reaction 5-formimidoyltetrahydrofolate + L-glutamate = N-formimidoyl-L-glutamate + (6S)-5,6,7,8-tetrahydrofolate. The catalysed reaction is (6S)-5-formyl-5,6,7,8-tetrahydrofolate + ATP = (6R)-5,10-methenyltetrahydrofolate + ADP + phosphate. The protein operates within amino-acid degradation; L-histidine degradation into L-glutamate; L-glutamate from N-formimidoyl-L-glutamate (transferase route): step 1/1. Its pathway is one-carbon metabolism; tetrahydrofolate interconversion. Its function is as follows. Catalyzes the transfer of the formyl group from N-formylglutamate to tetrahydrofolate (THF) to yield 5-formyltetrahydrofolate (5-CHO-THF) and glutamate (Glu). The triglutamate form of 5-CHO-THF (5-CHO-THF-Glu3) can also be used as substrate. It can also catalyze the transfer of the formimino group from N-formiminoglutamate to tetrahydrofolate (THF) to yield 5-formiminotetrahydrofolate (5-NH=CH-THF) and glutamate (Glu). It can replace YgfA to catalyze the irreversible ATP-dependent transformation of 5-CHO-THF to form 5,10-methenyltetrahydrofolate (5,10-CH=THF). This is Glutamate formimidoyltransferase from Thermoplasma acidophilum (strain ATCC 25905 / DSM 1728 / JCM 9062 / NBRC 15155 / AMRC-C165).